Here is a 138-residue protein sequence, read N- to C-terminus: Basic phospholipase A2 DsM-b1/DsM-b1' (138 aa).

Positions 1–16 are cleaved as a signal peptide; sequence MRTLWIVAMCLIGVEG. Intrachain disulfides connect cysteine 42-cysteine 131, cysteine 44-cysteine 60, cysteine 59-cysteine 111, cysteine 65-cysteine 138, cysteine 66-cysteine 104, cysteine 73-cysteine 97, and cysteine 91-cysteine 102. Ca(2+)-binding residues include tyrosine 43, glycine 45, and glycine 47. Histidine 63 is a catalytic residue. Residue aspartate 64 participates in Ca(2+) binding. Aspartate 105 is an active-site residue.

The cofactor is Ca(2+). Expressed by the venom gland.

It localises to the secreted. It catalyses the reaction a 1,2-diacyl-sn-glycero-3-phosphocholine + H2O = a 1-acyl-sn-glycero-3-phosphocholine + a fatty acid + H(+). Functionally, exhibits high hydrolytic activities and shows strong preference for the anionic micelles (dPPC with deoxycholate) to the zwitterionic micelles (dPPC with Triton X-100). PLA2 catalyzes the calcium-dependent hydrolysis of the 2-acyl groups in 3-sn-phosphoglycerides. This chain is Basic phospholipase A2 DsM-b1/DsM-b1', found in Daboia siamensis (Eastern Russel's viper).